The following is a 599-amino-acid chain: Cytadherence high molecular weight protein 3 (599 aa).

Residues 220-236 (VQVDSGSQNHSFNNSPS) are compositionally biased toward polar residues. Residues 220–241 (VQVDSGSQNHSFNNSPSLKPPL) form a disordered region.

Its subcellular location is the cell projection. The protein localises to the attachment organelle membrane. Its function is as follows. Component of the cytoskeleton-like structure which stabilizes the shape of the wall-less mycoplasma. This cytoskeleton-like network of accessory proteins containing HMW proteins 1 to 5 allows the proper anchoring of cytadhesin proteins in the mycoplasmal membrane at the attachment organelle. Essential for successful surface parasitism. In Mycoplasma genitalium (strain ATCC 33530 / DSM 19775 / NCTC 10195 / G37) (Mycoplasmoides genitalium), this protein is Cytadherence high molecular weight protein 3 (hmw3).